Consider the following 312-residue polypeptide: Methionyl-tRNA formyltransferase (312 aa).

(6S)-5,6,7,8-tetrahydrofolate is bound at residue 109–112 (SLLP).

It belongs to the Fmt family.

The enzyme catalyses L-methionyl-tRNA(fMet) + (6R)-10-formyltetrahydrofolate = N-formyl-L-methionyl-tRNA(fMet) + (6S)-5,6,7,8-tetrahydrofolate + H(+). Its function is as follows. Attaches a formyl group to the free amino group of methionyl-tRNA(fMet). The formyl group appears to play a dual role in the initiator identity of N-formylmethionyl-tRNA by promoting its recognition by IF2 and preventing the misappropriation of this tRNA by the elongation apparatus. The chain is Methionyl-tRNA formyltransferase from Ruminiclostridium cellulolyticum (strain ATCC 35319 / DSM 5812 / JCM 6584 / H10) (Clostridium cellulolyticum).